The chain runs to 487 residues: ATP synthase subunit beta (487 aa).

An ATP-binding site is contributed by 164–171 (GGAGVGKT).

The protein belongs to the ATPase alpha/beta chains family. F-type ATPases have 2 components, CF(1) - the catalytic core - and CF(0) - the membrane proton channel. CF(1) has five subunits: alpha(3), beta(3), gamma(1), delta(1), epsilon(1). CF(0) has four main subunits: a(1), b(1), b'(1) and c(9-12).

It is found in the cellular thylakoid membrane. It carries out the reaction ATP + H2O + 4 H(+)(in) = ADP + phosphate + 5 H(+)(out). Produces ATP from ADP in the presence of a proton gradient across the membrane. The catalytic sites are hosted primarily by the beta subunits. In Synechococcus sp. (strain CC9605), this protein is ATP synthase subunit beta.